Consider the following 2641-residue polypeptide: Prosolanapyrone synthase (2641 aa).

The 427-residue stretch at 14–440 (PEPIAIVGMG…GANGHCIIDD (427 aa)) folds into the Ketosynthase family 3 (KS3) domain. Active-site for beta-ketoacyl synthase activity residues include Cys187, His323, and His363. The disordered stretch occupies residues 456-515 (SIGHINGHTNGHTNGHTNGHTNGHTNGHTNGHTNGAHASDGHNGHHQNGMNGNSASHMSE). Over residues 461 to 490 (NGHTNGHTNGHTNGHTNGHTNGHTNGHTNG) the composition is skewed to low complexity. The segment at 619–920 (FVFTGQGAQW…KGPVGQISRS (302 aa)) is malonyl-CoA:ACP transacylase (MAT). Residues 1011–1149 (HDLLGSKLPG…GRVRVIAGTS (139 aa)) are N-terminal hotdog fold. The segment at 1011–1309 (HDLLGSKLPG…GNLRCVTYTE (299 aa)) is dehydratase (DH) domain. One can recognise a PKS/mFAS DH domain in the interval 1011 to 1313 (HDLLGSKLPG…CVTYTEVLPS (303 aa)). His1043 serves as the catalytic Proton acceptor; for dehydratase activity. Positions 1161–1313 (ARTLDTKAWY…CVTYTEVLPS (153 aa)) are C-terminal hotdog fold. The Proton donor; for dehydratase activity role is filled by Asp1227. Residues 1477 to 1665 (TGAYPQLVRF…GAELVLDDYP (189 aa)) are methyltransferase (MT) domain. The tract at residues 1894–2206 (GLLTSLYFKP…KGTHVGKLVV (313 aa)) is enoyl reductase (ER) domain. Residues 2231–2408 (NYLITGGLGG…STVSFGLIRD (178 aa)) are ketoreductase (KR) domain. A Carrier domain is found at 2561-2639 (RTVALVTDAI…ILANKIVDGA (79 aa)). The residue at position 2598 (Ser2598) is an O-(pantetheine 4'-phosphoryl)serine.

The protein operates within phytotoxin biosynthesis. Functionally, prosolanapyrone synthase; part of the gene cluster that mediates the biosynthesis of the phytotoxin solanapyrone, a causal agent of early blight disease of potato and tomato. The prosolanapyrone synthase sol1 is a polyketide synthase that produces the octaketide desmethylprosolanapyrone I via sequential condensations of 7 malonyl-CoA units with one acetyl-CoA unit, and one methylation step. The octaketide backbone is further methylated by the sol2 O-methyltransferase to yield prosolanapyrone I. Prosolanapyrone I is hydroxylated to prosolanapyrone II by the cytochrome P450 monooxygenase sol6. The solanapyrone synthase sol5 then catalyzes the oxidation of prosolanapyrone II and the subsequent Diels Alder cycloisomerization of the product prosolanapyrone III to solanapyrones A and D. Solanapyrones A and D are then converted into solanapyrones B and E, respectively, by the sol3 dehydrogenase. In Alternaria solani, this protein is Prosolanapyrone synthase (sol1).